Here is a 266-residue protein sequence, read N- to C-terminus: UPF0354 protein lwe1624 (266 aa).

It belongs to the UPF0354 family.

This is UPF0354 protein lwe1624 from Listeria welshimeri serovar 6b (strain ATCC 35897 / DSM 20650 / CCUG 15529 / CIP 8149 / NCTC 11857 / SLCC 5334 / V8).